The sequence spans 479 residues: Siroheme synthase (479 aa).

The segment at 1–202 (MNYLPIFLDL…GRDSEAEAQL (202 aa)) is precorrin-2 dehydrogenase /sirohydrochlorin ferrochelatase. NAD(+) contacts are provided by residues 22 to 23 (ET) and 43 to 44 (PA). Residue Ser-128 is modified to Phosphoserine. A uroporphyrinogen-III C-methyltransferase region spans residues 217–479 (GEVYLVGAGP…TPLEAPDHLA (263 aa)). Pro-226 contacts S-adenosyl-L-methionine. The active-site Proton acceptor is Asp-249. Lys-271 serves as the catalytic Proton donor. Residues 302–304 (GGD), Ile-307, 332–333 (TA), Met-384, and Gly-413 each bind S-adenosyl-L-methionine.

This sequence in the N-terminal section; belongs to the precorrin-2 dehydrogenase / sirohydrochlorin ferrochelatase family. It in the C-terminal section; belongs to the precorrin methyltransferase family.

It catalyses the reaction uroporphyrinogen III + 2 S-adenosyl-L-methionine = precorrin-2 + 2 S-adenosyl-L-homocysteine + H(+). The enzyme catalyses precorrin-2 + NAD(+) = sirohydrochlorin + NADH + 2 H(+). It carries out the reaction siroheme + 2 H(+) = sirohydrochlorin + Fe(2+). It functions in the pathway cofactor biosynthesis; adenosylcobalamin biosynthesis; precorrin-2 from uroporphyrinogen III: step 1/1. Its pathway is cofactor biosynthesis; adenosylcobalamin biosynthesis; sirohydrochlorin from precorrin-2: step 1/1. The protein operates within porphyrin-containing compound metabolism; siroheme biosynthesis; precorrin-2 from uroporphyrinogen III: step 1/1. It participates in porphyrin-containing compound metabolism; siroheme biosynthesis; siroheme from sirohydrochlorin: step 1/1. It functions in the pathway porphyrin-containing compound metabolism; siroheme biosynthesis; sirohydrochlorin from precorrin-2: step 1/1. Multifunctional enzyme that catalyzes the SAM-dependent methylations of uroporphyrinogen III at position C-2 and C-7 to form precorrin-2 via precorrin-1. Then it catalyzes the NAD-dependent ring dehydrogenation of precorrin-2 to yield sirohydrochlorin. Finally, it catalyzes the ferrochelation of sirohydrochlorin to yield siroheme. In Thiobacillus denitrificans (strain ATCC 25259 / T1), this protein is Siroheme synthase.